Here is a 117-residue protein sequence, read N- to C-terminus: Large ribosomal subunit protein uL18 (117 aa).

The protein belongs to the universal ribosomal protein uL18 family. Part of the 50S ribosomal subunit; part of the 5S rRNA/L5/L18/L25 subcomplex. Contacts the 5S and 23S rRNAs.

Functionally, this is one of the proteins that bind and probably mediate the attachment of the 5S RNA into the large ribosomal subunit, where it forms part of the central protuberance. This is Large ribosomal subunit protein uL18 from Mannheimia succiniciproducens (strain KCTC 0769BP / MBEL55E).